A 602-amino-acid chain; its full sequence is Arginine--tRNA ligase (602 aa).

The short motif at 138–148 (ANPTGPMHVGH) is the 'HIGH' region element.

This sequence belongs to the class-I aminoacyl-tRNA synthetase family. As to quaternary structure, monomer.

It localises to the cytoplasm. The enzyme catalyses tRNA(Arg) + L-arginine + ATP = L-arginyl-tRNA(Arg) + AMP + diphosphate. The chain is Arginine--tRNA ligase from Gluconobacter oxydans (strain 621H) (Gluconobacter suboxydans).